We begin with the raw amino-acid sequence, 180 residues long: Threonylcarbamoyl-AMP synthase (180 aa).

A YrdC-like domain is found at 1–180; sequence MRARALQHFL…DLITGAIVRP (180 aa).

The protein belongs to the SUA5 family. TsaC subfamily.

It localises to the cytoplasm. It carries out the reaction L-threonine + hydrogencarbonate + ATP = L-threonylcarbamoyladenylate + diphosphate + H2O. Required for the formation of a threonylcarbamoyl group on adenosine at position 37 (t(6)A37) in tRNAs that read codons beginning with adenine. Catalyzes the conversion of L-threonine, HCO(3)(-)/CO(2) and ATP to give threonylcarbamoyl-AMP (TC-AMP) as the acyladenylate intermediate, with the release of diphosphate. The sequence is that of Threonylcarbamoyl-AMP synthase from Methylobacillus flagellatus (strain ATCC 51484 / DSM 6875 / VKM B-1610 / KT).